The sequence spans 443 residues: Endoplasmic reticulum protein SC65 (443 aa).

Positions 1-18 (MARAAWGLLWLLLGSAGA) are cleaved as a signal peptide. Residues 81-102 (SGPATSQPRPAPGPDGDNEGDG) are disordered. A glycan (N-linked (GlcNAc...) asparagine) is linked at Asn367. 3 stretches are compositionally biased toward acidic residues: residues 387–398 (DEMELEETESLP), 407–419 (AEFE…EEGL), and 431–443 (GDED…PELA). The tract at residues 387–443 (DEMELEETESLPEPEKPLSDAEFEGEGDYEEGLYADWWQEPDAKGDEDEAEPEPELA) is disordered.

Belongs to the leprecan family. As to quaternary structure, interacts with PLOD1, P3H3 and PPIB. Identified in a complex with PLOD1 and P3H3. In terms of tissue distribution, found in testis, brain, heart and at a much lower level in liver.

It localises to the endoplasmic reticulum. Part of a complex composed of PLOD1, P3H3 and P3H4 that catalyzes hydroxylation of lysine residues in collagen alpha chains and is required for normal assembly and cross-linking of collagen fibrils. Required for normal bone density and normal skin stability via its role in hydroxylation of lysine residues in collagen alpha chains and in collagen fibril assembly. The protein is Endoplasmic reticulum protein SC65 of Rattus norvegicus (Rat).